Here is a 350-residue protein sequence, read N- to C-terminus: Adenine deaminase (350 aa).

Zn(2+) contacts are provided by His24, His26, and His207. Glu210 (proton donor) is an active-site residue. Residue Asp288 coordinates Zn(2+). Position 289 (Asp289) interacts with substrate.

Belongs to the metallo-dependent hydrolases superfamily. Adenosine and AMP deaminases family. Adenine deaminase type 2 subfamily. The cofactor is Zn(2+).

The enzyme catalyses adenine + H2O + H(+) = hypoxanthine + NH4(+). Functionally, catalyzes the hydrolytic deamination of adenine to hypoxanthine. Plays an important role in the purine salvage pathway and in nitrogen catabolism. This is Adenine deaminase from Paraburkholderia xenovorans (strain LB400).